Reading from the N-terminus, the 361-residue chain is tRNA-specific 2-thiouridylase MnmA (361 aa).

Residues 6–13 and Ile32 contribute to the ATP site; that span reads LVSGGVDS. The segment at 93–95 is interaction with target base in tRNA; it reads NPD. Cys98 acts as the Nucleophile in catalysis. Cys98 and Cys193 are joined by a disulfide. Gly121 provides a ligand contact to ATP. The segment at 143-145 is interaction with tRNA; sequence KDQ. Cys193 (cysteine persulfide intermediate) is an active-site residue.

It belongs to the MnmA/TRMU family.

The protein localises to the cytoplasm. It catalyses the reaction S-sulfanyl-L-cysteinyl-[protein] + uridine(34) in tRNA + AH2 + ATP = 2-thiouridine(34) in tRNA + L-cysteinyl-[protein] + A + AMP + diphosphate + H(+). In terms of biological role, catalyzes the 2-thiolation of uridine at the wobble position (U34) of tRNA, leading to the formation of s(2)U34. This chain is tRNA-specific 2-thiouridylase MnmA, found in Porphyromonas gingivalis (strain ATCC BAA-308 / W83).